We begin with the raw amino-acid sequence, 747 residues long: Fibroblast growth factor receptor (747 aa).

Residues methionine 1–leucine 24 form the signal peptide. The Extracellular portion of the chain corresponds to lysine 25–tyrosine 288. N-linked (GlcNAc...) asparagine glycosylation is found at asparagine 26, asparagine 42, and asparagine 63. Positions glutamate 47–threonine 68 are disordered. Ig-like C2-type domains lie at proline 74 to aspartate 167 and proline 175 to threonine 267. Cysteines 99 and 151 form a disulfide. Asparagine 161, asparagine 185, asparagine 217, asparagine 227, and asparagine 240 each carry an N-linked (GlcNAc...) asparagine glycan. The cysteines at positions 198 and 251 are disulfide-linked. The chain crosses the membrane as a helical span at residues leucine 289–cysteine 309. Residues asparagine 310–valine 747 are Cytoplasmic-facing. The Protein kinase domain occupies isoleucine 377–leucine 660. ATP contacts are provided by residues isoleucine 383–valine 391 and lysine 412. The active-site Proton acceptor is aspartate 525. The residue at position 556 (tyrosine 556) is a Phosphotyrosine; by autocatalysis. Residues tyrosine 679–proline 731 are disordered. Residues isoleucine 710 to glutamate 719 are compositionally biased toward basic and acidic residues.

Belongs to the protein kinase superfamily. Tyr protein kinase family. Fibroblast growth factor receptor subfamily.

The protein resides in the membrane. It carries out the reaction L-tyrosyl-[protein] + ATP = O-phospho-L-tyrosyl-[protein] + ADP + H(+). Its function is as follows. Receptor for basic fibroblast growth factor. This chain is Fibroblast growth factor receptor (FGFR), found in Ciona intestinalis (Transparent sea squirt).